Consider the following 246-residue polypeptide: Carboxylesterase (246 aa).

Ser-93 serves as the catalytic Nucleophile. Catalysis depends on charge relay system residues Asp-192 and His-222.

It belongs to the lipase/esterase LIP3/BchO family. Homodimer.

It carries out the reaction a carboxylic ester + H2O = an alcohol + a carboxylate + H(+). Involved in the detoxification of xenobiotics. Shows maximal activity with C6 substrates, with gradually decreasing activity from C8 to C12 substrates. No activity for higher chain length substrates acids rather than long-chain ones. In Bacillus subtilis (strain 168), this protein is Carboxylesterase (est).